The chain runs to 285 residues: NAD kinase (285 aa).

The active-site Proton acceptor is the aspartate 66. NAD(+) contacts are provided by residues 66–67 (DG), 137–138 (ND), arginine 148, arginine 165, aspartate 167, and 178–183 (TAYSMS).

This sequence belongs to the NAD kinase family. A divalent metal cation serves as cofactor.

The protein localises to the cytoplasm. The catalysed reaction is NAD(+) + ATP = ADP + NADP(+) + H(+). In terms of biological role, involved in the regulation of the intracellular balance of NAD and NADP, and is a key enzyme in the biosynthesis of NADP. Catalyzes specifically the phosphorylation on 2'-hydroxyl of the adenosine moiety of NAD to yield NADP. In Chlorobium phaeobacteroides (strain DSM 266 / SMG 266 / 2430), this protein is NAD kinase.